The following is a 503-amino-acid chain: Betaine aldehyde dehydrogenase 2 (503 aa).

W161–W170 provides a ligand contact to betaine aldehyde. An NAD(+)-binding site is contributed by G238 to G243. Betaine aldehyde is bound by residues E260, Q292–S295, and C453. Catalysis depends on residues E260 and C294. Residues E260 to L261 and C294 each bind 4-aminobutanal. W459 is a binding site for 4-aminobutanal. The Microbody targeting signal signature appears at S501–L503.

Belongs to the aldehyde dehydrogenase family. In terms of assembly, homodimer.

It is found in the peroxisome. The protein localises to the cytoplasm. The enzyme catalyses betaine aldehyde + NAD(+) + H2O = glycine betaine + NADH + 2 H(+). It functions in the pathway amine and polyamine biosynthesis; betaine biosynthesis via choline pathway; betaine from betaine aldehyde: step 1/1. Functionally, dehydrogenase that can use N-acetyl-c-aminobutyraldehyde (NAGABald), gamma-guanidinobutyraldehyde (GGBald), betaine aldehyde (Bet-ald), gamma-aminobutyraldehyde (GAB-ald), acetaldehyde, 4-aminobutylaldehyde (AB-ald), 3-aminopropionaldehyde (AP-ald), 4-N-trimethylaminobutyraldehyde (TMAB-ald) and 3-N-trimethylaminopropionaldehyde (TMAP-ald) as substrates. Catalyzes the oxidation of GAB-ald more efficiently than Bet-ald. Mediates the conversion of GAB-ald into gamma-aminobutyric acid (GABA), and prevents the formation of 2-acetyl-1-pyrroline (2AP) which gives fragrant rice its aromatic properties. The sequence is that of Betaine aldehyde dehydrogenase 2 (BADH2) from Oryza sativa subsp. indica (Rice).